The following is a 132-amino-acid chain: Agouti-signaling protein (132 aa).

Positions 1–22 (MDVTRLLLATLLVFLCFFTACS) are cleaved as a signal peptide. The N-linked (GlcNAc...) asparagine glycan is linked to N39. A disordered region spans residues 61-87 (QISRKEAEKKRSSKKEASMKKVARPRT). Residues 63–79 (SRKEAEKKRSSKKEASM) are compositionally biased toward basic and acidic residues. 5 cysteine pairs are disulfide-bonded: C93/C108, C100/C114, C107/C125, C111/C132, and C116/C123. Residues 93 to 132 (CVATRDSCKPPAPACCDPCASCQCRFFRSACSCRVLSLNC) enclose the Agouti domain.

The protein resides in the secreted. Its function is as follows. Involved in the regulation of melanogenesis. The binding of ASP to MC1R precludes alpha-MSH initiated signaling and thus blocks production of cAMP, leading to a down-regulation of eumelanogenesis (brown/black pigment) and thus increasing synthesis of pheomelanin (yellow/red pigment). This Macaca nigrescens (Gorontalo macaque) protein is Agouti-signaling protein (ASIP).